We begin with the raw amino-acid sequence, 465 residues long: MQLLRALGVFHVSMILFSATLGTGIFVTPKAVLKYSSLNIPVSLSIWAGCGLLSIMSALCNAEIATTYPLSGASYYFLKRTLGSSVAFLSLWIKLFAHFLGIGAQCLLIATSVIQCFYSGCPAPELPTKCLALAILWSFGIVSARGIKTVAWFNTVSSFIKLSVLCLISLTVLLVNGKKENVSRFENALDAELPNASQIADAILQVSYSYLGSSVLIVIAGEIKRPTETIPKTLIYGISIVTVLYLLTNISYLAVLTSQEIIFSDSVGVTWMNRVFPSIQWISSFLISAFLLGSVSCGIVSASRVFYSASQEGEFPSIYSMLNDHHSPAVADIQIVILSSVAIISSSIIYLVKYVSLGSFCINLLQMIGLLKIRYQNPDIPRPYKVWLPFIFGSIALSLFLIFTPVIQSPSIEHVYQVVFLFCGFLCYWLQANLNGHATCFDTITCYCQLLFNISPSEDPEEQKN.

Over 1-6 (MQLLRA) the chain is Cytoplasmic. Residues 7–27 (LGVFHVSMILFSATLGTGIFV) form a helical membrane-spanning segment. The Extracellular portion of the chain corresponds to 28 to 39 (TPKAVLKYSSLN). The helical transmembrane segment at 40–60 (IPVSLSIWAGCGLLSIMSALC) threads the bilayer. Topologically, residues 61 to 81 (NAEIATTYPLSGASYYFLKRT) are cytoplasmic. Residues 82-102 (LGSSVAFLSLWIKLFAHFLGI) form a helical membrane-spanning segment. At 103–132 (GAQCLLIATSVIQCFYSGCPAPELPTKCLA) the chain is on the extracellular side. The chain crosses the membrane as a helical span at residues 133 to 153 (LAILWSFGIVSARGIKTVAWF). Position 154 (asparagine 154) is a topological domain, cytoplasmic. A helical membrane pass occupies residues 155-175 (TVSSFIKLSVLCLISLTVLLV). At 176–202 (NGKKENVSRFENALDAELPNASQIADA) the chain is on the extracellular side. The helical transmembrane segment at 203–223 (ILQVSYSYLGSSVLIVIAGEI) threads the bilayer. Residues 224–234 (KRPTETIPKTL) are Cytoplasmic-facing. The chain crosses the membrane as a helical span at residues 235-255 (IYGISIVTVLYLLTNISYLAV). The Extracellular segment spans residues 256–280 (LTSQEIIFSDSVGVTWMNRVFPSIQ). A helical membrane pass occupies residues 281-301 (WISSFLISAFLLGSVSCGIVS). The Cytoplasmic portion of the chain corresponds to 302-327 (ASRVFYSASQEGEFPSIYSMLNDHHS). Residues 328 to 351 (PAVADIQIVILSSVAIISSSIIYL) traverse the membrane as a helical segment. Topologically, residues 352–356 (VKYVS) are extracellular. The helical transmembrane segment at 357 to 375 (LGSFCINLLQMIGLLKIRY) threads the bilayer. Residues 376–386 (QNPDIPRPYKV) are Cytoplasmic-facing. A helical transmembrane segment spans residues 387-407 (WLPFIFGSIALSLFLIFTPVI). The Extracellular segment spans residues 408 to 409 (QS). Residues 410–430 (PSIEHVYQVVFLFCGFLCYWL) traverse the membrane as a helical segment. At 431 to 465 (QANLNGHATCFDTITCYCQLLFNISPSEDPEEQKN) the chain is on the cytoplasmic side.

It belongs to the amino acid-polyamine-organocation (APC) superfamily. Probably forms multimers, perhaps with an unknown protein(s). Expressed in kidney and red blood cells (at protein level). Expressed in kidney along the collecting ducts in the cortex, outer and inner medulla. May be expressed in placenta, lungs, spleen and skeletal muscles.

Its subcellular location is the apical cell membrane. The protein resides in the basal cell membrane. It localises to the cytoplasm. Functionally, probably mediates sodium- and chloride-independent uptake of neutral amino acids. The sequence is that of Solute carrier family 7 member 12 from Mus musculus (Mouse).